The primary structure comprises 211 residues: MDFDFKVSGDFIVSGAEQLDDTDLTRSDEFWLIQAPLGQFPEIEENTLKIEPDKDGLFGEFKDSNAGSLHLCLGAKYDLASFHSQDAGAELIIPSEESMIVGKITRRVALVRYPEPNELLQKMKARTQQKLVGSVTNSSKKSSNLTQSSRHKSGTRSSREKSMFSGFTETPKSPKRKNSESSSGKHRSSTSTVSGSSERSAKSKKKVKKEE.

Residues 128–211 (QQKLVGSVTN…KSKKKVKKEE (84 aa)) form a disordered region. The span at 134–148 (SVTNSSKKSSNLTQS) shows a compositional bias: low complexity. S173 is subject to Phosphoserine. Low complexity predominate over residues 189–198 (STSTVSGSSE). The segment covering 202-211 (KSKKKVKKEE) has biased composition (basic residues).

Associated with the Mediator complex.

The protein resides in the nucleus. This is Mediator-associated protein 2 from Arabidopsis thaliana (Mouse-ear cress).